The following is a 203-amino-acid chain: Large ribosomal subunit protein bL25 (203 aa).

It belongs to the bacterial ribosomal protein bL25 family. CTC subfamily. In terms of assembly, part of the 50S ribosomal subunit; part of the 5S rRNA/L5/L18/L25 subcomplex. Contacts the 5S rRNA. Binds to the 5S rRNA independently of L5 and L18.

Its function is as follows. This is one of the proteins that binds to the 5S RNA in the ribosome where it forms part of the central protuberance. The polypeptide is Large ribosomal subunit protein bL25 (Rickettsia peacockii (strain Rustic)).